We begin with the raw amino-acid sequence, 96 residues long: Co-chaperonin GroES (96 aa).

This sequence belongs to the GroES chaperonin family. As to quaternary structure, heptamer of 7 subunits arranged in a ring. Interacts with the chaperonin GroEL.

It localises to the cytoplasm. Together with the chaperonin GroEL, plays an essential role in assisting protein folding. The GroEL-GroES system forms a nano-cage that allows encapsulation of the non-native substrate proteins and provides a physical environment optimized to promote and accelerate protein folding. GroES binds to the apical surface of the GroEL ring, thereby capping the opening of the GroEL channel. This chain is Co-chaperonin GroES, found in Legionella pneumophila (strain Paris).